The primary structure comprises 312 residues: tRNA pseudouridine synthase B (312 aa).

D46 acts as the Nucleophile in catalysis. The substrate site is built by Y74, Y177, and L198.

The protein belongs to the pseudouridine synthase TruB family. Type 1 subfamily.

The enzyme catalyses uridine(55) in tRNA = pseudouridine(55) in tRNA. In terms of biological role, responsible for synthesis of pseudouridine from uracil-55 in the psi GC loop of transfer RNAs. The polypeptide is tRNA pseudouridine synthase B (Buchnera aphidicola subsp. Schizaphis graminum (strain Sg)).